A 114-amino-acid polypeptide reads, in one-letter code: Putative pterin-4-alpha-carbinolamine dehydratase (114 aa).

This sequence belongs to the pterin-4-alpha-carbinolamine dehydratase family.

The catalysed reaction is (4aS,6R)-4a-hydroxy-L-erythro-5,6,7,8-tetrahydrobiopterin = (6R)-L-erythro-6,7-dihydrobiopterin + H2O. The chain is Putative pterin-4-alpha-carbinolamine dehydratase from Chlorobium luteolum (strain DSM 273 / BCRC 81028 / 2530) (Pelodictyon luteolum).